Consider the following 2255-residue polypeptide: Non-reducing polyketide synthase nvfA (2255 aa).

Positions 13-251 (ILFGPQSSDM…HHPDHTAAVE (239 aa)) are N-terminal acylcarrier protein transacylase domain (SAT). Positions 365 to 781 (VRPIAVTGMA…GSNAAIVLRQ (417 aa)) constitute a Ketosynthase family 3 (KS3) domain. Catalysis depends on for beta-ketoacyl synthase activity residues Cys-530, His-665, and His-704. Residues 887 to 1187 (LCFGGQNGNT…QASDLKSPQA (301 aa)) form a malonyl-CoA:ACP transacylase (MAT) domain region. Ser-974 serves as the catalytic For acyl/malonyl transferase activity. The segment at 1229 to 1357 (EPMGLVQVLE…GRISLHPFDS (129 aa)) is N-terminal hotdog fold. The 308-residue stretch at 1229–1536 (EPMGLVQVLE…FTSVSIRALT (308 aa)) folds into the PKS/mFAS DH domain. Residues 1232–1535 (GLVQVLEKRP…TFTSVSIRAL (304 aa)) are product template (PT) domain. His-1262 acts as the Proton acceptor; for dehydratase activity in catalysis. Positions 1385 to 1536 (SSSGLKGSAV…FTSVSIRALT (152 aa)) are C-terminal hotdog fold. The Proton donor; for dehydratase activity role is filled by Asp-1443. The Carrier domain maps to 1581-1655 (TNKFPAIQAM…CLVQAIFPGA (75 aa)). O-(pantetheine 4'-phosphoryl)serine is present on Ser-1615. The methyltransferase (CMeT) domain stretch occupies residues 1809 to 2042 (HHASEHTLLR…GYNWVNWSCN (234 aa)). Positions 2109-2227 (LLIHGGGHVM…ILSFYCPTDY (119 aa)) are thioesterase (TE) domain. Ser-2194 (for thioesterase activity) is an active-site residue.

It catalyses the reaction 3 malonyl-CoA + acetyl-CoA + 2 S-adenosyl-L-methionine = 3,5-dimethylorsellinate + 2 S-adenosyl-L-homocysteine + 3 CO2 + 4 CoA. The protein operates within secondary metabolite biosynthesis; terpenoid biosynthesis. Its function is as follows. Non-reducing polyketide synthase; part of the gene cluster that mediates the biosynthesis of novofumigatonin, a heavily oxygenated meroterpenoid containing a unique orthoester moiety. The first step of the pathway is the synthesis of 3,5-dimethylorsellinic acid (DMOA) by the polyketide synthase nvfA via condensation of one acetyl-CoA starter unit with 3 malonyl-CoA units and 2 methylations. DMOA is then converted to farnesyl-DMOA by the farnesyltransferase nvfB. Epoxydation by FAD-dependent monooxygenase nvfK, followed by a protonation-initiated cyclization catalyzed by the terpene cyclase nvfL leads to the production of asnavolin H. The short chain dehydrogenase nvfC then as a 3-OH dehydrogenase of asnovolin H to yield chemesin D. There are two branches to synthesize asnovolin A from chemesin D. In one branch, chemesin D undergoes Baeyer-Villiger oxidation by nvfH, methylation by nvfJ, and enoyl reduction by the nvfM D enoylreductase that reduces the double bond between C-5'and C-6', to form respectively asnovolin I, asnovolin K, and asnovolin A. In the other branch, the methylation precedes the Baeyer-Villiger oxidation and the enoyl reduction to yield asnovolin A via the asnovolin J intermediate. Asnovolin A is further converted to fumigatonoid A by the Fe(II)/2-oxoglutarate-dependent dioxygenase nvfI that catalyzes an endoperoxidation reaction. The alpha/beta hydrolase nvfD then acts as an epimerase that converts fumigatonoid A to its C-5' epimer, which then undergoes spontaneous or nvfD-catalyzed lactonization. The following step utilizes the ketoreductase nvfG to produce fumigatonoid B. The dioxygenase nvfE further converts fumigatonoid B into fumigatonoid C. Finally the Fe(II)/2-oxoglutarate-dependent dioxygenase nvfF catalyzes two rounds of oxidation to transform fumigatonoid C into the end product, novofumigatonin A. The polypeptide is Non-reducing polyketide synthase nvfA (Aspergillus novofumigatus (strain IBT 16806)).